A 136-amino-acid chain; its full sequence is ATP synthase epsilon chain, chloroplastic (136 aa).

It belongs to the ATPase epsilon chain family. As to quaternary structure, F-type ATPases have 2 components, CF(1) - the catalytic core - and CF(0) - the membrane proton channel. CF(1) has five subunits: alpha(3), beta(3), gamma(1), delta(1), epsilon(1). CF(0) has three main subunits: a, b and c.

Its subcellular location is the plastid. The protein localises to the chloroplast thylakoid membrane. In terms of biological role, produces ATP from ADP in the presence of a proton gradient across the membrane. The sequence is that of ATP synthase epsilon chain, chloroplastic from Chaetosphaeridium globosum (Charophycean green alga).